Here is a 141-residue protein sequence, read N- to C-terminus: Large ribosomal subunit protein uL11 (141 aa).

Belongs to the universal ribosomal protein uL11 family. As to quaternary structure, part of the ribosomal stalk of the 50S ribosomal subunit. Interacts with L10 and the large rRNA to form the base of the stalk. L10 forms an elongated spine to which L12 dimers bind in a sequential fashion forming a multimeric L10(L12)X complex. In terms of processing, one or more lysine residues are methylated.

In terms of biological role, forms part of the ribosomal stalk which helps the ribosome interact with GTP-bound translation factors. This Chlamydia trachomatis serovar L2 (strain ATCC VR-902B / DSM 19102 / 434/Bu) protein is Large ribosomal subunit protein uL11.